A 432-amino-acid polypeptide reads, in one-letter code: Enolase (432 aa).

Residues 41-64 form a disordered region; sequence QVPSGASTGSFEAHELRDGDPKRY. Residues 52 to 64 are compositionally biased toward basic and acidic residues; the sequence is EAHELRDGDPKRY. Q168 contributes to the (2R)-2-phosphoglycerate binding site. E211 functions as the Proton donor in the catalytic mechanism. Positions 248, 289, and 316 each coordinate Mg(2+). Residues K341, R370, S371, and K392 each contribute to the (2R)-2-phosphoglycerate site. K341 (proton acceptor) is an active-site residue.

The protein belongs to the enolase family. Mg(2+) serves as cofactor.

Its subcellular location is the cytoplasm. It is found in the secreted. The protein resides in the cell surface. The catalysed reaction is (2R)-2-phosphoglycerate = phosphoenolpyruvate + H2O. It participates in carbohydrate degradation; glycolysis; pyruvate from D-glyceraldehyde 3-phosphate: step 4/5. Its function is as follows. Catalyzes the reversible conversion of 2-phosphoglycerate (2-PG) into phosphoenolpyruvate (PEP). It is essential for the degradation of carbohydrates via glycolysis. The sequence is that of Enolase from Synechocystis sp. (strain ATCC 27184 / PCC 6803 / Kazusa).